A 143-amino-acid chain; its full sequence is MIIKTKYHGEIRIDEGQIISFENGLPGFNDETQFVVLPLSEDSPFLALQSVKQEHIAFIVASPFIFFKGYEFDIDHATLELLHIEDIEDVEVMAILTLEEPFENTTANLKAPIIVNKKEMKAKQIILHDASYETKHLIGGGSC.

The protein belongs to the FliW family. Interacts with translational regulator CsrA and flagellin(s).

The protein localises to the cytoplasm. Acts as an anti-CsrA protein, binds CsrA and prevents it from repressing translation of its target genes, one of which is flagellin. Binds to flagellin and participates in the assembly of the flagellum. The sequence is that of Flagellar assembly factor FliW from Bacillus velezensis (strain DSM 23117 / BGSC 10A6 / LMG 26770 / FZB42) (Bacillus amyloliquefaciens subsp. plantarum).